The following is a 298-amino-acid chain: Beta-soluble NSF attachment protein (298 aa).

The protein belongs to the SNAP family. Interacts with PRKCABP, and disrupts the interaction between GRIA2 and PRKCABP, leading to the internalization of GRIA2.

It is found in the membrane. Required for vesicular transport between the endoplasmic reticulum and the Golgi apparatus. The chain is Beta-soluble NSF attachment protein (NAPB) from Homo sapiens (Human).